We begin with the raw amino-acid sequence, 342 residues long: Prenyl transferase ptmC (342 aa).

Residues 17 to 37 form a helical membrane-spanning segment; sequence LSFLTLTVGALALIVVLYISI. H110 lines the isopentenyl diphosphate pocket. Mg(2+) is bound by residues D117 and D121. A dimethylallyl diphosphate-binding site is contributed by R126. N-linked (GlcNAc...) asparagine glycosylation occurs at N154. K210, T211, Q240, N247, and K257 together coordinate dimethylallyl diphosphate.

It belongs to the FPP/GGPP synthase family.

Its subcellular location is the membrane. Its pathway is secondary metabolite biosynthesis. Prenyl transferase; part of the gene cluster that mediates the biosynthesis of the indole diterpenes penitrems. The geranylgeranyl diphosphate (GGPP) synthase ptmG catalyzes the first step in penitrem biosynthesis via conversion of farnesyl pyrophosphate and isopentyl pyrophosphate into geranylgeranyl pyrophosphate (GGPP). Condensation of indole-3-glycerol phosphate with GGPP by the prenyl transferase ptmC then forms 3-geranylgeranylindole (3-GGI). Epoxidation by the FAD-dependent monooxygenase ptmM leads to a epoxidized-GGI that is substrate of the terpene cyclase ptmB for cyclization to yield paspaline. Paspaline is subsequently converted to 13-desoxypaxilline by the cytochrome P450 monooxygenase ptmP, the latter being then converted to paxilline by the cytochrome P450 monooxygenase ptmQ. Paxilline is converted to beta-paxitriol via C-10 ketoreduction by the short-chain dehydrogenase ptmH which can be monoprenylated at the C-20 by the indole diterpene prenyltransferase ptmD. A two-step elimination (acetylation and elimination) process performed by the O-acetyltransferase ptmV and ptmI leads to the production of the prenylated form of penijanthine. The FAD-linked oxidoreductase ptmO then converts the prenylated form of penijanthine into PC-M5 which is in turn transformed into PC-M4 by the aromatic dimethylallyltransferase ptmE. Five sequential oxidative transformations performed by the cytochrome P450 monooxygenases ptmK, ptmU, ptmL, ptmN and ptmJ yield the various penitrem compounds. PtmK, ptmU and ptmM are involved in the formation of the key bicyclic ring of penitrem C via the formation of the intermediates secopenitrem D and penitrem D. PtmL catalyzes the epoxidation of penitrem D and C to yield penitrem B and F, respectively. PtmJ catalyzes the last benzylic hydroxylation to convert penitrem B to prenitrem E and penitrem F to penitrem A. The polypeptide is Prenyl transferase ptmC (Penicillium ochrochloron).